The chain runs to 310 residues: uncharacterized protein (310 aa).

The disordered stretch occupies residues 1–70; that stretch reads MAGNSQRRGA…ARGRTDETET (70 aa). Residues 49–62 are compositionally biased toward basic residues; that stretch reads AAKRAKAQQRRPAR. The S-adenosyl-L-methionine site is built by glycine 262, valine 282, and leucine 291.

It belongs to the class IV-like SAM-binding methyltransferase superfamily. RNA methyltransferase TrmH family.

This is an uncharacterized protein from Mycobacterium marinum (strain ATCC BAA-535 / M).